Here is a 489-residue protein sequence, read N- to C-terminus: Rhamnulokinase (489 aa).

13-17 (ASSGR) serves as a coordination point for ATP. An intrachain disulfide couples Cys68 to Cys222. Substrate-binding positions include Gly83 and 236-238 (HDT). The active-site Proton acceptor is Asp237. Thr259 contacts ATP. A substrate-binding site is contributed by Asn296. Gln304 provides a ligand contact to ATP. A disulfide bridge connects residues Cys353 and Cys370. ATP is bound at residue Gly402. Cys413 and Cys417 are disulfide-bonded.

The protein belongs to the rhamnulokinase family. Mg(2+) is required as a cofactor.

The enzyme catalyses L-rhamnulose + ATP = L-rhamnulose 1-phosphate + ADP + H(+). It participates in carbohydrate degradation; L-rhamnose degradation; glycerone phosphate from L-rhamnose: step 2/3. In terms of biological role, involved in the catabolism of L-rhamnose (6-deoxy-L-mannose). Catalyzes the transfer of the gamma-phosphate group from ATP to the 1-hydroxyl group of L-rhamnulose to yield L-rhamnulose 1-phosphate. In Salmonella typhimurium (strain LT2 / SGSC1412 / ATCC 700720), this protein is Rhamnulokinase.